The following is a 394-amino-acid chain: Elongation factor Tu, mitochondrial (394 aa).

A tr-type G domain is found at 10-204; that stretch reads KPHCNIGTIG…AVDNYIPQPE (195 aa). A G1 region spans residues 19 to 26; sequence GHVDHGKT. Residue 19–26 participates in GTP binding; the sequence is GHVDHGKT. Residues 60–64 are G2; it reads GITIS. A G3 region spans residues 81–84; it reads DCPG. GTP is bound by residues 81-85 and 136-139; these read DCPGH and NKVD. The segment at 136 to 139 is G4; that stretch reads NKVD. Residues 174–176 are G5; it reads SAL.

This sequence belongs to the TRAFAC class translation factor GTPase superfamily. Classic translation factor GTPase family. EF-Tu/EF-1A subfamily.

It localises to the mitochondrion. Its function is as follows. This protein promotes the GTP-dependent binding of aminoacyl-tRNA to the A-site of ribosomes during protein biosynthesis. In Reclinomonas americana, this protein is Elongation factor Tu, mitochondrial (TUFA).